A 308-amino-acid polypeptide reads, in one-letter code: uncharacterized protein (308 aa).

Helical transmembrane passes span 45-65 (LGLA…KIAL), 69-89 (SPFA…LPFL), 100-120 (IGIA…YTTA), 122-142 (NAGF…WLVY), 151-171 (VSGV…SGFN), 172-192 (IGDI…AMIS), 201-221 (TMLA…FAVF), 226-246 (FEIN…ATFV), 263-283 (AAVI…AVLA), and 285-305 (ILTP…IIVS). 2 consecutive EamA domains span residues 52–166 (LIWG…FLSG) and 178–306 (LFCA…IVSL).

The protein belongs to the EamA transporter family.

It is found in the cell membrane. This is an uncharacterized protein from Archaeoglobus fulgidus (strain ATCC 49558 / DSM 4304 / JCM 9628 / NBRC 100126 / VC-16).